Reading from the N-terminus, the 859-residue chain is ATP-dependent RNA helicase DDX24 (859 aa).

Lysine 17 is subject to N6-acetyllysine. Serine 60 carries the phosphoserine modification. Positions 61–175 (PAKNPSSLFS…SQSTAAKVPK (115 aa)) are disordered. The residue at position 71 (lysine 71) is an N6-acetyllysine. A phosphoserine mark is found at serine 82 and serine 94. The span at 82-91 (SEEEEEEEGE) shows a compositional bias: acidic residues. Positions 95–105 (PKKKIKLKKSK) are enriched in basic residues. Positions 106–115 (NVATEGTSTQ) are enriched in polar residues. Positions 192–220 (SAWKDLFVPRPVLRALSFLGFSAPTPIQV) match the Q motif motif. The region spanning 224–528 (APAIRDKLDI…RILHKKHTKK (305 aa)) is the Helicase ATP-binding domain. Position 237–244 (237–244 (AETGSGKT)) interacts with ATP. Positions 262–374 (NAAPPPSNTE…QTGNLKQELD (113 aa)) are disordered. The segment covering 277-293 (TRPEAGAETRSPGKAEA) has biased composition (basic and acidic residues). Residues serine 287 and serine 295 each carry the phosphoserine modification. Over residues 294 to 304 (ESDALPDDTVI) the composition is skewed to acidic residues. Threonine 302 bears the Phosphothreonine mark. Residue lysine 370 forms a Glycyl lysine isopeptide (Lys-Gly) (interchain with G-Cter in SUMO2) linkage. Positions 471-474 (DEAD) match the DEAD box motif. Positions 578-723 (YLYYFLMQYP…LFPVQTKYMD (146 aa)) constitute a Helicase C-terminal domain. Residues lysine 624, lysine 808, and lysine 825 each participate in a glycyl lysine isopeptide (Lys-Gly) (interchain with G-Cter in SUMO2) cross-link. Polar residues-rich tracts occupy residues 799–814 (PLFT…TQSG) and 823–834 (PSKSESALSCLS). Residues 799–859 (PLFTESQKTK…EQPQPSTSAN (61 aa)) form a disordered region.

Belongs to the DEAD box helicase family. DDX24/MAK5 subfamily. In terms of assembly, interacts with FADD. Interacts with RIPK1; this interaction disrupts RLR signaling activation of IFN-dependent transcription factor IRF7. Interacts with NIP7. Interacts with EP300; this interaction prevents TP53 acetylation mediated by EP300. Post-translationally, ubiquitinated by MDM2 without targeting DDX24 for proteasomal degradation. Instead, polyubiquitylated DDX24 promotes interaction with NIP7, a component of pre-rRNP processing complex, and associates with pre-rRNA molecules and pre-ribosomal particles.

The protein resides in the cytoplasm. It localises to the nucleus. The catalysed reaction is ATP + H2O = ADP + phosphate + H(+). In terms of biological role, ATP-dependent RNA helicase that plays a role in various aspects of RNA metabolism including pre-mRNA splicing and is thereby involved in different biological processes such as cell cycle regulation or innate immunity. Plays an inhibitory role in TP53 transcriptional activity and subsequently in TP53 controlled cell growth arrest and senescence by inhibiting its EP300 mediated acetylation. Negatively regulates cytosolic RNA-mediated innate immune signaling at least in part by affecting RIPK1/IRF7 interactions. Alternatively, possesses antiviral activity by recognizing gammaherpesvirus transcripts in the context of lytic reactivation. Plays an essential role in cell cycle regulation in vascular smooth muscle cells by interacting with and regulating FANCA (Fanconi anemia complementation group A) mRNA. The protein is ATP-dependent RNA helicase DDX24 (DDX24) of Pongo abelii (Sumatran orangutan).